A 62-amino-acid polypeptide reads, in one-letter code: Photosystem II reaction center protein Z (62 aa).

The next 2 helical transmembrane spans lie at 8–28 (ALFA…VILA) and 41–61 (FSGA…NSFI).

It belongs to the PsbZ family. In terms of assembly, PSII is composed of 1 copy each of membrane proteins PsbA, PsbB, PsbC, PsbD, PsbE, PsbF, PsbH, PsbI, PsbJ, PsbK, PsbL, PsbM, PsbT, PsbY, PsbZ, Psb30/Ycf12, at least 3 peripheral proteins of the oxygen-evolving complex and a large number of cofactors. It forms dimeric complexes.

It localises to the plastid. It is found in the chloroplast thylakoid membrane. In terms of biological role, may control the interaction of photosystem II (PSII) cores with the light-harvesting antenna, regulates electron flow through the 2 photosystem reaction centers. PSII is a light-driven water plastoquinone oxidoreductase, using light energy to abstract electrons from H(2)O, generating a proton gradient subsequently used for ATP formation. The chain is Photosystem II reaction center protein Z from Chara vulgaris (Common stonewort).